The primary structure comprises 71 residues: Translation initiation factor IF-1 (71 aa).

The region spanning 1–71 is the S1-like domain; that stretch reads MAKQSAIEQD…LSKARITYRY (71 aa).

Belongs to the IF-1 family. In terms of assembly, component of the 30S ribosomal translation pre-initiation complex which assembles on the 30S ribosome in the order IF-2 and IF-3, IF-1 and N-formylmethionyl-tRNA(fMet); mRNA recruitment can occur at any time during PIC assembly.

The protein resides in the cytoplasm. In terms of biological role, one of the essential components for the initiation of protein synthesis. Stabilizes the binding of IF-2 and IF-3 on the 30S subunit to which N-formylmethionyl-tRNA(fMet) subsequently binds. Helps modulate mRNA selection, yielding the 30S pre-initiation complex (PIC). Upon addition of the 50S ribosomal subunit IF-1, IF-2 and IF-3 are released leaving the mature 70S translation initiation complex. This is Translation initiation factor IF-1 from Flavobacterium johnsoniae (strain ATCC 17061 / DSM 2064 / JCM 8514 / BCRC 14874 / CCUG 350202 / NBRC 14942 / NCIMB 11054 / UW101) (Cytophaga johnsonae).